The chain runs to 110 residues: SLFAPSALVLTVGEGESAADSGVQRAVTLTCTPKASGTHPAARAACDQLRAVDGDFKALVTTKSDRVCTKEYRPIVITAEGVWDGHRVSYEHKFANPCMASDGKGVVFEF.

2 disulfides stabilise this stretch: Cys-31–Cys-46 and Cys-68–Cys-98.

It belongs to the protease inhibitor I16 (SSI) family. As to quaternary structure, homodimer.

It localises to the secreted. The chain is Protease inhibitor SIL-V1/SIL-V4 from Streptomyces netropsis (Streptoverticillium netropsis).